Reading from the N-terminus, the 67-residue chain is uncharacterized protein (67 aa).

This is an uncharacterized protein from Rickettsia prowazekii (strain Madrid E).